A 300-amino-acid chain; its full sequence is Hydroxyacyl-thioester dehydratase type 2, mitochondrial (300 aa).

It belongs to the HTD2 family.

It is found in the mitochondrion. Functionally, mitochondrial 3-hydroxyacyl-thioester dehydratase involved in fatty acid biosynthesis. Required for respiratory growth and for normal mitochondrial morphology. This chain is Hydroxyacyl-thioester dehydratase type 2, mitochondrial (htd2), found in Schizosaccharomyces pombe (strain 972 / ATCC 24843) (Fission yeast).